Consider the following 822-residue polypeptide: Phenylalanine--tRNA ligase beta subunit (822 aa).

The region spanning 44-162 is the tRNA-binding domain; the sequence is LSKNTNLVVG…DQIALGSNAL (119 aa). The disordered stretch occupies residues 201–224; that stretch reads QSSNNNQETKSTNYKTKNSEDQTN. One can recognise a B5 domain in the interval 430–513; the sequence is RTNPTISLNL…RLYGCHKLPP (84 aa). Mg(2+)-binding residues include Asp-491, Asp-497, and Asp-501. Positions 730 to 822 constitute an FDX-ACB domain; it reads PKFPTVIRDL…LIKHFHIEIR (93 aa).

This sequence belongs to the phenylalanyl-tRNA synthetase beta subunit family. Type 1 subfamily. In terms of assembly, tetramer of two alpha and two beta subunits. The cofactor is Mg(2+).

The protein resides in the cytoplasm. The catalysed reaction is tRNA(Phe) + L-phenylalanine + ATP = L-phenylalanyl-tRNA(Phe) + AMP + diphosphate + H(+). The sequence is that of Phenylalanine--tRNA ligase beta subunit from Onion yellows phytoplasma (strain OY-M).